The chain runs to 312 residues: Methionyl-tRNA formyltransferase (312 aa).

Residues 34–54 (PDAASGRRGKPQPSPVAREAA) are disordered. 110–113 (SLLP) contributes to the (6S)-5,6,7,8-tetrahydrofolate binding site.

The protein belongs to the Fmt family.

The enzyme catalyses L-methionyl-tRNA(fMet) + (6R)-10-formyltetrahydrofolate = N-formyl-L-methionyl-tRNA(fMet) + (6S)-5,6,7,8-tetrahydrofolate + H(+). Attaches a formyl group to the free amino group of methionyl-tRNA(fMet). The formyl group appears to play a dual role in the initiator identity of N-formylmethionyl-tRNA by promoting its recognition by IF2 and preventing the misappropriation of this tRNA by the elongation apparatus. This Mycobacterium tuberculosis (strain ATCC 25177 / H37Ra) protein is Methionyl-tRNA formyltransferase.